Reading from the N-terminus, the 204-residue chain is Protein LURP-one-related 14 (204 aa).

Belongs to the LOR family.

Functionally, might be related to the phospholipid scramblase and tubby-like superfamily of membrane tethered transcription factors. The polypeptide is Protein LURP-one-related 14 (Arabidopsis thaliana (Mouse-ear cress)).